Consider the following 201-residue polypeptide: Retinol-binding protein 4 (201 aa).

The signal sequence occupies residues 1–18 (MEWVWALVLLAALGGGSA). 3 disulfides stabilise this stretch: Cys22–Cys178, Cys88–Cys192, and Cys138–Cys147. Gln116 provides a ligand contact to substrate. The residue at position 139 (Arg139) is an Omega-N-methylarginine.

The protein belongs to the calycin superfamily. Lipocalin family. In terms of assembly, interacts with TTR. Interaction with TTR prevents its loss by filtration through the kidney glomeruli. Interacts with STRA6. As to expression, detected in blood plasma (at protein level).

It localises to the secreted. Functionally, retinol-binding protein that mediates retinol transport in blood plasma. Delivers retinol from the liver stores to the peripheral tissues. Transfers the bound all-trans retinol to STRA6, that then facilitates retinol transport across the cell membrane. The polypeptide is Retinol-binding protein 4 (Rbp4) (Rattus norvegicus (Rat)).